A 618-amino-acid chain; its full sequence is MRTLWRFIAGFFKWTWRLLNFVREMVLNLFFIFLVLVGVGIWMQVSGGDSKETASRGALLLDISGVIVDKPDSSQRFSKLSRQLLGASSDRLQENSLFDIVNTIRQAKDDRNITGIVMDLKNFAGGDQPSMQYIGKALKEFRDSGKPVYAVGENYSQGQYYLASFANKIWLSPQGVVDLHGFATNGLYYKSLLDKLKVSTHVFRVGTYKSAVEPFIRDDMSPAAREADSRWIGELWQNYLNTVAANRQIPAEQVFPGAQGLLEGLTKTGGDTAKYALENKLVDALASSAEIEKALTKEFGWSKTDKNYRAISYYDYALKTPADTGDSIGVVFANGAIMDGEETQGNVGGDTTAAQIRDARLDPKVKAIVLRVNSPGGSVTASEVIRAELAAARAAGKPVVVSMGGMAASGGYWISTPANYIVANPSTLTGSIGIFGVITTVENSLDSIGVHTDGVSTSPLADVSITRALPPEAQLMMQLSIENGYKRFITLVADARHSTPEQIDKIAQGHVWTGQDAKANGLVDSLGDFDDAVAKAAELAKVKQWHLEYYVDEPTFFDKVMDNMSGSVRAMLPDAFQAMLPAPLASVASTVKSESDKLAAFNDPQNRYAFCLTCANMR.

Residues 1 to 24 lie on the Cytoplasmic side of the membrane; that stretch reads MRTLWRFIAGFFKWTWRLLNFVRE. Residues 25 to 45 traverse the membrane as a helical segment; that stretch reads MVLNLFFIFLVLVGVGIWMQV. The Periplasmic portion of the chain corresponds to 46 to 618; it reads SGGDSKETAS…AFCLTCANMR (573 aa). Lys-209 serves as the catalytic Proton donor/acceptor. The active-site Nucleophile is Ser-409.

It belongs to the peptidase S49 family. In terms of assembly, homotetramer.

The protein localises to the cell inner membrane. With respect to regulation, inhibited by serine hydrolase inhibitor FP-biotin and by antipain. In terms of biological role, digests cleaved signal peptides in vitro, its in vivo function is unknown. This activity is necessary to maintain proper secretion of mature proteins across the membrane. In Escherichia coli (strain K12), this protein is Protease 4 (sppA).